A 156-amino-acid chain; its full sequence is Small ribosomal subunit protein uS7 (156 aa).

It belongs to the universal ribosomal protein uS7 family. As to quaternary structure, part of the 30S ribosomal subunit. Contacts proteins S9 and S11.

One of the primary rRNA binding proteins, it binds directly to 16S rRNA where it nucleates assembly of the head domain of the 30S subunit. Is located at the subunit interface close to the decoding center, probably blocks exit of the E-site tRNA. This Mycoplasmopsis agalactiae (strain NCTC 10123 / CIP 59.7 / PG2) (Mycoplasma agalactiae) protein is Small ribosomal subunit protein uS7.